Reading from the N-terminus, the 256-residue chain is Triosephosphate isomerase (256 aa).

12 to 14 lines the substrate pocket; it reads NWK. His99 functions as the Electrophile in the catalytic mechanism. Glu171 acts as the Proton acceptor in catalysis. Substrate is bound by residues Gly177, Ser217, and 238-239; that span reads GG.

This sequence belongs to the triosephosphate isomerase family. Homodimer.

The protein resides in the cytoplasm. It catalyses the reaction D-glyceraldehyde 3-phosphate = dihydroxyacetone phosphate. It participates in carbohydrate biosynthesis; gluconeogenesis. Its pathway is carbohydrate degradation; glycolysis; D-glyceraldehyde 3-phosphate from glycerone phosphate: step 1/1. Functionally, involved in the gluconeogenesis. Catalyzes stereospecifically the conversion of dihydroxyacetone phosphate (DHAP) to D-glyceraldehyde-3-phosphate (G3P). This chain is Triosephosphate isomerase, found in Rubrobacter xylanophilus (strain DSM 9941 / JCM 11954 / NBRC 16129 / PRD-1).